A 172-amino-acid chain; its full sequence is SsrA-binding protein (172 aa).

Belongs to the SmpB family.

The protein resides in the cytoplasm. Required for rescue of stalled ribosomes mediated by trans-translation. Binds to transfer-messenger RNA (tmRNA), required for stable association of tmRNA with ribosomes. tmRNA and SmpB together mimic tRNA shape, replacing the anticodon stem-loop with SmpB. tmRNA is encoded by the ssrA gene; the 2 termini fold to resemble tRNA(Ala) and it encodes a 'tag peptide', a short internal open reading frame. During trans-translation Ala-aminoacylated tmRNA acts like a tRNA, entering the A-site of stalled ribosomes, displacing the stalled mRNA. The ribosome then switches to translate the ORF on the tmRNA; the nascent peptide is terminated with the 'tag peptide' encoded by the tmRNA and targeted for degradation. The ribosome is freed to recommence translation, which seems to be the essential function of trans-translation. The protein is SsrA-binding protein of Dehalococcoides mccartyi (strain ATCC BAA-2100 / JCM 16839 / KCTC 5957 / BAV1).